We begin with the raw amino-acid sequence, 296 residues long: Light-independent protochlorophyllide reductase iron-sulfur ATP-binding protein (296 aa).

Residues 10–15 (GIGKST) and Lys-39 each bind ATP. Ser-14 contacts Mg(2+). [4Fe-4S] cluster-binding residues include Cys-95 and Cys-129. Residue 180–181 (NR) coordinates ATP.

This sequence belongs to the NifH/BchL/ChlL family. In terms of assembly, homodimer. Protochlorophyllide reductase is composed of three subunits; ChlL, ChlN and ChlB. It depends on [4Fe-4S] cluster as a cofactor.

It localises to the plastid. The protein localises to the chloroplast. The catalysed reaction is chlorophyllide a + oxidized 2[4Fe-4S]-[ferredoxin] + 2 ADP + 2 phosphate = protochlorophyllide a + reduced 2[4Fe-4S]-[ferredoxin] + 2 ATP + 2 H2O. It functions in the pathway porphyrin-containing compound metabolism; chlorophyll biosynthesis (light-independent). In terms of biological role, component of the dark-operative protochlorophyllide reductase (DPOR) that uses Mg-ATP and reduced ferredoxin to reduce ring D of protochlorophyllide (Pchlide) to form chlorophyllide a (Chlide). This reaction is light-independent. The L component serves as a unique electron donor to the NB-component of the complex, and binds Mg-ATP. The polypeptide is Light-independent protochlorophyllide reductase iron-sulfur ATP-binding protein (Chlorokybus atmophyticus (Soil alga)).